We begin with the raw amino-acid sequence, 387 residues long: Large ribosomal subunit protein uL3 (387 aa).

Belongs to the universal ribosomal protein uL3 family.

The protein resides in the cytoplasm. In Kluyveromyces lactis (strain ATCC 8585 / CBS 2359 / DSM 70799 / NBRC 1267 / NRRL Y-1140 / WM37) (Yeast), this protein is Large ribosomal subunit protein uL3 (RPL3).